Here is a 302-residue protein sequence, read N- to C-terminus: Ribonucleoside-diphosphate reductase small subunit (302 aa).

Positions 61, 91, and 94 each coordinate Fe cation. The active site involves tyrosine 98. The chain crosses the membrane as a helical span at residues 147–167 (ILVFLLIEGIFFISSFYSIAL). The Fe cation site is built by glutamate 154, glutamate 188, and histidine 191.

This sequence belongs to the ribonucleoside diphosphate reductase small chain family. Heterotetramer composed of a homodimer of the large subunit (R1) and a homodimer of the small subunit (R2). Larger multisubunit protein complex are also active, composed of (R1)n(R2)n. Requires Fe cation as cofactor.

It localises to the host membrane. It carries out the reaction a 2'-deoxyribonucleoside 5'-diphosphate + [thioredoxin]-disulfide + H2O = a ribonucleoside 5'-diphosphate + [thioredoxin]-dithiol. In terms of biological role, ribonucleoside-diphosphate reductase holoenzyme provides the precursors necessary for viral DNA synthesis. Allows virus growth in non-dividing cells, as well as reactivation from latency in infected hosts. Catalyzes the biosynthesis of deoxyribonucleotides from the corresponding ribonucleotides. The polypeptide is Ribonucleoside-diphosphate reductase small subunit (Homo sapiens (Human)).